Reading from the N-terminus, the 499-residue chain is Protein-tyrosine sulfotransferase (499 aa).

Residues Met-1–Lys-9 lie on the Cytoplasmic side of the membrane. A helical; Signal-anchor for type II membrane protein transmembrane segment spans residues Val-10–Glu-30. The Lumenal segment spans residues Leu-31–Thr-499. Arg-80–Thr-84 contacts 3'-phosphoadenylyl sulfate. A disulfide bond links Cys-98 and Cys-158. Residue Glu-101 is the Proton donor/acceptor of the active site. Positions Arg-103–Arg-107 are interaction with peptide substrate. 3'-phosphoadenylyl sulfate contacts are provided by Arg-185, Ser-193, and Arg-197. A disulfide bridge connects residues Cys-227 and Cys-235. 3'-phosphoadenylyl sulfate-binding positions include Tyr-240, Ser-287–Asn-296, and Lys-302. Residues Asn-346 and Asn-380 are each glycosylated (N-linked (GlcNAc...) asparagine). 2 disordered regions span residues Lys-362 to Lys-460 and Asn-476 to Thr-499. 2 stretches are compositionally biased toward low complexity: residues Thr-375–Glu-400 and His-408–Gln-434. A compositionally biased stretch (basic and acidic residues) spans Glu-443–Lys-460. The segment covering Asn-476–Ile-491 has biased composition (low complexity).

It belongs to the protein sulfotransferase family.

It localises to the golgi apparatus membrane. It carries out the reaction L-tyrosyl-[protein] + 3'-phosphoadenylyl sulfate = O-sulfo-L-tyrosine-[protein] + adenosine 3',5'-bisphosphate + H(+). In terms of biological role, catalyzes the O-sulfation of tyrosine residues within acidic motifs of polypeptides. Has a role in protein secretion. This chain is Protein-tyrosine sulfotransferase, found in Drosophila melanogaster (Fruit fly).